The sequence spans 301 residues: MVADANGSSSSSFNFLIYGKTGWIGGLLGKLCEAQGITYTYGSGRLQDRQSIVADIESVKPSHVFNAAGVTGRPNVDWCESHKVETIRTNVAGTLTLADICREKGLVLINYATGCIFEYDSGHPLGSGIGFKEEDTPNFTGSFYSKTKAMVEELLKNYENVCTLRVRMPISSDLTNPRNFITKIARYEKVVDIPNSMTILDELLPISIEMAKRNLTGIYNFTNPGVVSHNEILEMYRDYIDPSFTWKNFTLEEQAKVIVAPRSNNELDATKLKTEFPELMSIKESLIKFVFEPNKKTEVKA.

Residues tryptophan 23–isoleucine 24, glycine 69–threonine 71, and tyrosine 111 each bind NADPH.

It belongs to the dTDP-4-dehydrorhamnose reductase family. Expressed in roots, leaves, stems and flowers.

It carries out the reaction dTDP-4-dehydro-6-deoxy-alpha-D-glucose = dTDP-4-dehydro-beta-L-rhamnose. The catalysed reaction is dTDP-beta-L-rhamnose + NADP(+) = dTDP-4-dehydro-beta-L-rhamnose + NADPH + H(+). Its pathway is carbohydrate biosynthesis; dTDP-L-rhamnose biosynthesis. Its function is as follows. Bifunctional enzyme involved in dTDP-beta-L-rhamnose biosynthesis. Catalyzes the epimerization of the C3' and C5'positions of dTDP-6-deoxy-4-keto-alpha-D-glucose to form dTDP-4-keto-beta-L-rhamnose and its reduction to yield dTDP-beta-L-rhamnose. Can form UDP-beta-L-rhamnose from UDP-6-deoxy-4-keto-alpha-D-glucose, but cannot convert GDP-4-dehydro-6-deoxy-D-mannose to GDP-fucose. In Arabidopsis thaliana (Mouse-ear cress), this protein is Bifunctional dTDP-4-dehydrorhamnose 3,5-epimerase/dTDP-4-dehydrorhamnose reductase.